Consider the following 276-residue polypeptide: Diaminopimelate epimerase (276 aa).

Asn-13, Gln-46, and Asn-66 together coordinate substrate. Catalysis depends on Cys-75, which acts as the Proton donor. Residues 76 to 77, Asn-159, Asn-192, and 210 to 211 each bind substrate; these read GN and ER. Residue Cys-219 is the Proton acceptor of the active site. 220–221 is a substrate binding site; it reads GT.

Belongs to the diaminopimelate epimerase family. As to quaternary structure, homodimer.

The protein localises to the cytoplasm. It carries out the reaction (2S,6S)-2,6-diaminopimelate = meso-2,6-diaminopimelate. Its pathway is amino-acid biosynthesis; L-lysine biosynthesis via DAP pathway; DL-2,6-diaminopimelate from LL-2,6-diaminopimelate: step 1/1. Functionally, catalyzes the stereoinversion of LL-2,6-diaminopimelate (L,L-DAP) to meso-diaminopimelate (meso-DAP), a precursor of L-lysine and an essential component of the bacterial peptidoglycan. This Pseudomonas putida (strain GB-1) protein is Diaminopimelate epimerase.